The primary structure comprises 274 residues: Large ribosomal subunit protein uL2 (274 aa).

The tract at residues 224–259 (AMNPVDHPHGGGEGRTSGGRHPVTPWGIPTKGYKTR) is disordered.

This sequence belongs to the universal ribosomal protein uL2 family. In terms of assembly, part of the 50S ribosomal subunit. Forms a bridge to the 30S subunit in the 70S ribosome.

Functionally, one of the primary rRNA binding proteins. Required for association of the 30S and 50S subunits to form the 70S ribosome, for tRNA binding and peptide bond formation. It has been suggested to have peptidyltransferase activity; this is somewhat controversial. Makes several contacts with the 16S rRNA in the 70S ribosome. This is Large ribosomal subunit protein uL2 from Citrifermentans bemidjiense (strain ATCC BAA-1014 / DSM 16622 / JCM 12645 / Bem) (Geobacter bemidjiensis).